The primary structure comprises 294 residues: Cytidine deaminase (294 aa).

2 CMP/dCMP-type deaminase domains span residues 48 to 168 (DEDA…FGPK) and 186 to 294 (LTGD…VLLG). 89 to 91 (NME) provides a ligand contact to substrate. Position 102 (His102) interacts with Zn(2+). Glu104 acts as the Proton donor in catalysis. Zn(2+)-binding residues include Cys129 and Cys132.

Belongs to the cytidine and deoxycytidylate deaminase family. As to quaternary structure, homodimer. It depends on Zn(2+) as a cofactor.

It catalyses the reaction cytidine + H2O + H(+) = uridine + NH4(+). The catalysed reaction is 2'-deoxycytidine + H2O + H(+) = 2'-deoxyuridine + NH4(+). In terms of biological role, this enzyme scavenges exogenous and endogenous cytidine and 2'-deoxycytidine for UMP synthesis. This Salmonella arizonae (strain ATCC BAA-731 / CDC346-86 / RSK2980) protein is Cytidine deaminase.